The sequence spans 541 residues: MPTELQTELAEAVEARRNFAIISHPDAGKTTLTEKLLLYGGAIHEAGAVKARRAQRHATSDWMEMEQQRGISITSTVLQFAYQHCQINLLDTPGHQDFSEDTYRTLAAADNAVMLVDAAKGLEPQTRKLFEVCKLRSLPIFTFINKLDRPGREPLELLDEIEQELGLQTYAVNWPIGMGDRFQGVFDRRSRKIHLFQRSDHGKREAIDTQIDLGDPQIESLLDQELYFQLKDELELIEELGSPLDLEQVHNGQMTPIFFGSAMTNFGVELFLEAFLDYALKPGAYESTQGTIEPTYEDFSGFVFKLQANMDPKHRDRVAFIRVCSGKFEKDMTVSHARTGKTIRLSRPQKLFAQGRNSLEEAYPGDIIGLNNPGVFAIGDTIFKGKKLAYEGIPCFSPELFAYLKNPNPSKFKQFQKGVSELREEGAVQIMYSEDEIKRDPILAAVGQLQFEVVQFRLQNEYGVETRLELLPYSVARWVKGGWSALESVGRIFNAITVKDSWGRPVLLFKNEWNLHQVHGDHPDLELSAIAPLAVDQNMVS.

The region spanning 14–283 (EARRNFAIIS…AFLDYALKPG (270 aa)) is the tr-type G domain. Residues 23–30 (SHPDAGKT), 91–95 (DTPGH), and 145–148 (NKLD) each bind GTP.

This sequence belongs to the TRAFAC class translation factor GTPase superfamily. Classic translation factor GTPase family. PrfC subfamily.

The protein resides in the cytoplasm. Its function is as follows. Increases the formation of ribosomal termination complexes and stimulates activities of RF-1 and RF-2. It binds guanine nucleotides and has strong preference for UGA stop codons. It may interact directly with the ribosome. The stimulation of RF-1 and RF-2 is significantly reduced by GTP and GDP, but not by GMP. The protein is Peptide chain release factor 3 of Acaryochloris marina (strain MBIC 11017).